Reading from the N-terminus, the 526-residue chain is GMP synthase [glutamine-hydrolyzing] (526 aa).

Positions 9 to 208 constitute a Glutamine amidotransferase type-1 domain; sequence RILILDFGSQ…LVNICGCKQL (200 aa). The Nucleophile role is filled by cysteine 86. Catalysis depends on residues histidine 182 and glutamate 184. Residues 209-401 enclose the GMPS ATP-PPase domain; it reads WTPGRIIEDA…LGLPYDMVYR (193 aa). Residue 236–242 participates in ATP binding; sequence SGGVDSS.

Homodimer.

The enzyme catalyses XMP + L-glutamine + ATP + H2O = GMP + L-glutamate + AMP + diphosphate + 2 H(+). It functions in the pathway purine metabolism; GMP biosynthesis; GMP from XMP (L-Gln route): step 1/1. In terms of biological role, catalyzes the synthesis of GMP from XMP. This Hahella chejuensis (strain KCTC 2396) protein is GMP synthase [glutamine-hydrolyzing].